The following is a 164-amino-acid chain: MRVLGIDPGSRITGYGIIEKVGNRLVHVDNGAIHTDNHKEFALRLHRIFEGLCEVIAEYRPDAMAVEQVFLAHNAQSALKLGQARGAAIVAGVNAGLPVSEYTAMQVKQAVVGYGHARKEQVQQMVKSLLNLPEIAQADASDALAVAVCHANSAGMKNILRSIR.

Catalysis depends on residues aspartate 7, glutamate 67, and aspartate 139. Mg(2+)-binding residues include aspartate 7, glutamate 67, and aspartate 139.

The protein belongs to the RuvC family. As to quaternary structure, homodimer which binds Holliday junction (HJ) DNA. The HJ becomes 2-fold symmetrical on binding to RuvC with unstacked arms; it has a different conformation from HJ DNA in complex with RuvA. In the full resolvosome a probable DNA-RuvA(4)-RuvB(12)-RuvC(2) complex forms which resolves the HJ. The cofactor is Mg(2+).

It is found in the cytoplasm. It catalyses the reaction Endonucleolytic cleavage at a junction such as a reciprocal single-stranded crossover between two homologous DNA duplexes (Holliday junction).. Functionally, the RuvA-RuvB-RuvC complex processes Holliday junction (HJ) DNA during genetic recombination and DNA repair. Endonuclease that resolves HJ intermediates. Cleaves cruciform DNA by making single-stranded nicks across the HJ at symmetrical positions within the homologous arms, yielding a 5'-phosphate and a 3'-hydroxyl group; requires a central core of homology in the junction. The consensus cleavage sequence is 5'-(A/T)TT(C/G)-3'. Cleavage occurs on the 3'-side of the TT dinucleotide at the point of strand exchange. HJ branch migration catalyzed by RuvA-RuvB allows RuvC to scan DNA until it finds its consensus sequence, where it cleaves and resolves the cruciform DNA. The sequence is that of Crossover junction endodeoxyribonuclease RuvC from Geobacter metallireducens (strain ATCC 53774 / DSM 7210 / GS-15).